A 78-amino-acid polypeptide reads, in one-letter code: Large ribosomal subunit protein eL38 (78 aa).

It belongs to the eukaryotic ribosomal protein eL38 family. As to quaternary structure, component of the large ribosomal subunit. Mature ribosomes consist of a small (40S) and a large (60S) subunit. The 40S subunit contains about 32 different proteins and 1 molecule of RNA (18S). The 60S subunit contains 45 different proteins and 3 molecules of RNA (25S, 5.8S and 5S).

Its subcellular location is the cytoplasm. Functionally, component of the ribosome, a large ribonucleoprotein complex responsible for the synthesis of proteins in the cell. The small ribosomal subunit (SSU) binds messenger RNAs (mRNAs) and translates the encoded message by selecting cognate aminoacyl-transfer RNA (tRNA) molecules. The large subunit (LSU) contains the ribosomal catalytic site termed the peptidyl transferase center (PTC), which catalyzes the formation of peptide bonds, thereby polymerizing the amino acids delivered by tRNAs into a polypeptide chain. The nascent polypeptides leave the ribosome through a tunnel in the LSU and interact with protein factors that function in enzymatic processing, targeting, and the membrane insertion of nascent chains at the exit of the ribosomal tunnel. This Candida albicans (strain SC5314 / ATCC MYA-2876) (Yeast) protein is Large ribosomal subunit protein eL38.